Here is a 393-residue protein sequence, read N- to C-terminus: NAD(P)H-quinone oxidoreductase subunit H, chloroplastic (393 aa).

The protein belongs to the complex I 49 kDa subunit family. In terms of assembly, NDH is composed of at least 16 different subunits, 5 of which are encoded in the nucleus.

Its subcellular location is the plastid. The protein localises to the chloroplast thylakoid membrane. The catalysed reaction is a plastoquinone + NADH + (n+1) H(+)(in) = a plastoquinol + NAD(+) + n H(+)(out). It catalyses the reaction a plastoquinone + NADPH + (n+1) H(+)(in) = a plastoquinol + NADP(+) + n H(+)(out). In terms of biological role, NDH shuttles electrons from NAD(P)H:plastoquinone, via FMN and iron-sulfur (Fe-S) centers, to quinones in the photosynthetic chain and possibly in a chloroplast respiratory chain. The immediate electron acceptor for the enzyme in this species is believed to be plastoquinone. Couples the redox reaction to proton translocation, and thus conserves the redox energy in a proton gradient. The chain is NAD(P)H-quinone oxidoreductase subunit H, chloroplastic from Oenothera argillicola (Appalachian evening primrose).